A 691-amino-acid chain; its full sequence is Elongation factor G (691 aa).

The tr-type G domain maps to 8–282 (EKTRNIGIMA…AVVDYLPSPV (275 aa)). GTP-binding positions include 17 to 24 (AHIDAGKT), 81 to 85 (DTPGH), and 135 to 138 (NKMD).

It belongs to the TRAFAC class translation factor GTPase superfamily. Classic translation factor GTPase family. EF-G/EF-2 subfamily.

It is found in the cytoplasm. Functionally, catalyzes the GTP-dependent ribosomal translocation step during translation elongation. During this step, the ribosome changes from the pre-translocational (PRE) to the post-translocational (POST) state as the newly formed A-site-bound peptidyl-tRNA and P-site-bound deacylated tRNA move to the P and E sites, respectively. Catalyzes the coordinated movement of the two tRNA molecules, the mRNA and conformational changes in the ribosome. This chain is Elongation factor G, found in Caldicellulosiruptor saccharolyticus (strain ATCC 43494 / DSM 8903 / Tp8T 6331).